The chain runs to 255 residues: Short chain dehydrogenase adrF (255 aa).

NADP(+) is bound by residues Ile11, Arg118, Tyr150, Lys154, and Val183. The active-site Proton acceptor is the Tyr150. Lys154 functions as the Lowers pKa of active site Tyr in the catalytic mechanism.

This sequence belongs to the short-chain dehydrogenases/reductases (SDR) family.

The protein operates within secondary metabolite biosynthesis; terpenoid biosynthesis. Short chain dehydrogenase; part of the gene cluster that mediates the biosynthesis of andrastins, meroterpenoid compounds that exhibit inhibitory activity against ras farnesyltransferase, suggesting that they could be promising leads for antitumor agents. The first step of the pathway is the synthesis of 3,5-dimethylorsellinic acid (DMOA) by the polyketide synthase adrD via condensation of one acetyl-CoA starter unit with 3 malonyl-CoA units and 2 methylations. DMAO is then converted to farnesyl-DMAO by the prenyltransferase adrG. The methyltransferase adrK catalyzes the methylation of the carboxyl group of farnesyl-DMAO to farnesyl-DMAO methyl ester which is further converted to epoxyfarnesyl-DMAO methyl ester by the FAD-dependent monooxygenase adrH. The terpene cyclase adrI then catalyzes the carbon skeletal rearrangement to generate the andrastin E, the first compound in the pathway having the andrastin scaffold, with the tetracyclic ring system. The post-cyclization tailoring enzymes adrF, adrE, adrJ, and adrA, are involved in the conversion of andrastin E into andrastin A. The short chain dehydrogenase adrF is responsible for the oxidation of the C-3 a hydroxyl group of andrastin E to yield the corresponding ketone, andrastin D. The ketoreductase adrE stereoselectively reduces the carbonyl moiety to reverse the stereochemistry of the C-3 position to yield andrastin F. The acetyltransferase adrJ is the acetyltransferase that attaches the acetyl group to the C-3 hydroxyl group of andrastin F to yield andrastin C. Finally, the cytochrome P450 monooxygenase adrA catalyzes two sequential oxidation reactions of the C-23 methyl group, to generate the corresponding alcohol andrastin B, and aldehyde andrastin A. This chain is Short chain dehydrogenase adrF, found in Penicillium rubens (strain ATCC 28089 / DSM 1075 / NRRL 1951 / Wisconsin 54-1255) (Penicillium chrysogenum).